A 313-amino-acid polypeptide reads, in one-letter code: Ribosomal RNA small subunit methyltransferase H (313 aa).

S-adenosyl-L-methionine contacts are provided by residues 35–37 (GGH), Asp-55, Phe-79, Asp-101, and Gln-108.

It belongs to the methyltransferase superfamily. RsmH family.

The protein localises to the cytoplasm. It carries out the reaction cytidine(1402) in 16S rRNA + S-adenosyl-L-methionine = N(4)-methylcytidine(1402) in 16S rRNA + S-adenosyl-L-homocysteine + H(+). Its function is as follows. Specifically methylates the N4 position of cytidine in position 1402 (C1402) of 16S rRNA. The polypeptide is Ribosomal RNA small subunit methyltransferase H (Klebsiella pneumoniae (strain 342)).